The primary structure comprises 376 residues: Phosphoglycerate kinase (376 aa).

Positions 1, 2, 3, 4, 17, 40, 41, 43, 44, 99, 100, 147, and 148 each coordinate (2R)-3-phosphoglycerate. Residue Gly191 coordinates ADP. Gly191 serves as a coordination point for CDP. 2 residues coordinate AMP: Ala192 and Lys193. Ala192 provides a ligand contact to ATP. Ala192 is a binding site for Mg(2+). Asp196 lines the CDP pocket. Asp196 serves as a coordination point for Mg(2+). Lys197 contributes to the AMP binding site. An ATP-binding site is contributed by Lys197. An ADP-binding site is contributed by Gly215. A CDP-binding site is contributed by Gly215. 2 residues coordinate AMP: Gly216 and Gly290. ATP-binding residues include Gly216 and Gly290. Positions 315 and 320 each coordinate CDP. Phe320 is an ADP binding site. AMP is bound at residue Glu321. Residues Glu321, Asp352, and Thr353 each coordinate ATP. Asp352 contacts Mg(2+).

This sequence belongs to the phosphoglycerate kinase family. In terms of assembly, monomer. Requires Mg(2+) as cofactor.

The catalysed reaction is (2R)-3-phosphoglycerate + ATP = (2R)-3-phospho-glyceroyl phosphate + ADP. It functions in the pathway carbohydrate degradation; glycolysis; pyruvate from D-glyceraldehyde 3-phosphate: step 2/5. The protein is Phosphoglycerate kinase (PGK) of Glaucoma chattoni.